Here is a 382-residue protein sequence, read N- to C-terminus: MIQFIRPKTASGKTIVVQLSASPPQTPPPTDTNALKNWLEILSQRIINGDRLTKTEALTLTQIDGQDNILLLCEAADRIRQACCGNVVDLCSIINVKSGNCSENCQFCSQSVHHQGENSPIYGLKSSEEILAQAKAAEVAGAKRFCLVSQGRGPKYNSPQSGEFEKILETVRQITTETNIKPCCALGEVTLEQAEALKEAGVTRYNHNLEASENYYQSIVSTHSWGDRVETVKNLKKAGIQACTGGIMGMGETWEDRVDLAISLRELEVDSVPINLLNPREGTPLGHLPKLDVFDALKAIAIFRFLLPEQILRYAGGREAVMGELQSLGLKSGINAMLIGHYLTTLGQPPENDHAMLESLGLQGGEAPIPGEYKKKTQKKAH.

The Radical SAM core domain maps to 83–318 (CCGNVVDLCS…EQILRYAGGR (236 aa)). [4Fe-4S] cluster contacts are provided by C101, C105, and C108. [2Fe-2S] cluster contacts are provided by C146, C183, C243, and R313.

The protein belongs to the radical SAM superfamily. Biotin synthase family. Homodimer. Requires [4Fe-4S] cluster as cofactor. [2Fe-2S] cluster serves as cofactor.

It carries out the reaction (4R,5S)-dethiobiotin + (sulfur carrier)-SH + 2 reduced [2Fe-2S]-[ferredoxin] + 2 S-adenosyl-L-methionine = (sulfur carrier)-H + biotin + 2 5'-deoxyadenosine + 2 L-methionine + 2 oxidized [2Fe-2S]-[ferredoxin]. The protein operates within cofactor biosynthesis; biotin biosynthesis; biotin from 7,8-diaminononanoate: step 2/2. Its function is as follows. Catalyzes the conversion of dethiobiotin (DTB) to biotin by the insertion of a sulfur atom into dethiobiotin via a radical-based mechanism. The protein is Biotin synthase of Crocosphaera subtropica (strain ATCC 51142 / BH68) (Cyanothece sp. (strain ATCC 51142)).